Consider the following 157-residue polypeptide: S-ribosylhomocysteine lyase (157 aa).

Fe cation is bound by residues H54, H58, and C124.

The protein belongs to the LuxS family. Homodimer. The cofactor is Fe cation.

The enzyme catalyses S-(5-deoxy-D-ribos-5-yl)-L-homocysteine = (S)-4,5-dihydroxypentane-2,3-dione + L-homocysteine. Involved in the synthesis of autoinducer 2 (AI-2) which is secreted by bacteria and is used to communicate both the cell density and the metabolic potential of the environment. The regulation of gene expression in response to changes in cell density is called quorum sensing. Catalyzes the transformation of S-ribosylhomocysteine (RHC) to homocysteine (HC) and 4,5-dihydroxy-2,3-pentadione (DPD). This Pediococcus pentosaceus (strain ATCC 25745 / CCUG 21536 / LMG 10740 / 183-1w) protein is S-ribosylhomocysteine lyase.